A 223-amino-acid chain; its full sequence is Probable transaldolase (223 aa).

Lysine 92 (schiff-base intermediate with substrate) is an active-site residue.

It belongs to the transaldolase family. Type 3B subfamily.

It is found in the cytoplasm. It carries out the reaction D-sedoheptulose 7-phosphate + D-glyceraldehyde 3-phosphate = D-erythrose 4-phosphate + beta-D-fructose 6-phosphate. The protein operates within carbohydrate degradation; pentose phosphate pathway; D-glyceraldehyde 3-phosphate and beta-D-fructose 6-phosphate from D-ribose 5-phosphate and D-xylulose 5-phosphate (non-oxidative stage): step 2/3. Its function is as follows. Transaldolase is important for the balance of metabolites in the pentose-phosphate pathway. The protein is Probable transaldolase of Thermus thermophilus (strain ATCC 27634 / DSM 579 / HB8).